A 556-amino-acid chain; its full sequence is Formate--tetrahydrofolate ligase (556 aa).

Thr-64–Thr-71 provides a ligand contact to ATP.

It belongs to the formate--tetrahydrofolate ligase family.

It catalyses the reaction (6S)-5,6,7,8-tetrahydrofolate + formate + ATP = (6R)-10-formyltetrahydrofolate + ADP + phosphate. It functions in the pathway one-carbon metabolism; tetrahydrofolate interconversion. The protein is Formate--tetrahydrofolate ligase of Actinobacillus pleuropneumoniae serotype 5b (strain L20).